The following is a 151-amino-acid chain: UPF0178 protein Sde_3033 (151 aa).

Belongs to the UPF0178 family.

The chain is UPF0178 protein Sde_3033 from Saccharophagus degradans (strain 2-40 / ATCC 43961 / DSM 17024).